The primary structure comprises 379 residues: Queuine tRNA-ribosyltransferase (379 aa).

The active-site Proton acceptor is the D94. Substrate is bound by residues 94 to 98 (DSGGF), D148, Q191, and G218. An RNA binding region spans residues 249 to 255 (GVGSPDA). Catalysis depends on D268, which acts as the Nucleophile. The tract at residues 273-277 (TRIAR) is RNA binding; important for wobble base 34 recognition. The Zn(2+) site is built by C306, C308, C311, and H337.

It belongs to the queuine tRNA-ribosyltransferase family. In terms of assembly, homodimer. Within each dimer, one monomer is responsible for RNA recognition and catalysis, while the other monomer binds to the replacement base PreQ1. Zn(2+) serves as cofactor.

The enzyme catalyses 7-aminomethyl-7-carbaguanine + guanosine(34) in tRNA = 7-aminomethyl-7-carbaguanosine(34) in tRNA + guanine. It participates in tRNA modification; tRNA-queuosine biosynthesis. Functionally, catalyzes the base-exchange of a guanine (G) residue with the queuine precursor 7-aminomethyl-7-deazaguanine (PreQ1) at position 34 (anticodon wobble position) in tRNAs with GU(N) anticodons (tRNA-Asp, -Asn, -His and -Tyr). Catalysis occurs through a double-displacement mechanism. The nucleophile active site attacks the C1' of nucleotide 34 to detach the guanine base from the RNA, forming a covalent enzyme-RNA intermediate. The proton acceptor active site deprotonates the incoming PreQ1, allowing a nucleophilic attack on the C1' of the ribose to form the product. After dissociation, two additional enzymatic reactions on the tRNA convert PreQ1 to queuine (Q), resulting in the hypermodified nucleoside queuosine (7-(((4,5-cis-dihydroxy-2-cyclopenten-1-yl)amino)methyl)-7-deazaguanosine). The protein is Queuine tRNA-ribosyltransferase of Staphylococcus aureus (strain Mu3 / ATCC 700698).